Here is a 321-residue protein sequence, read N- to C-terminus: GTP 3',8-cyclase (321 aa).

Residues 5–233 (SFNRVIDYIR…QGSSKIYTLE (229 aa)) enclose the Radical SAM core domain. Arg14 contacts GTP. Residues Cys21 and Cys25 each coordinate [4Fe-4S] cluster. Residue Tyr27 participates in S-adenosyl-L-methionine binding. Residue Cys28 participates in [4Fe-4S] cluster binding. Arg64 is a GTP binding site. An S-adenosyl-L-methionine-binding site is contributed by Gly68. A GTP-binding site is contributed by Ser95. An S-adenosyl-L-methionine-binding site is contributed by Ser119. Lys155 is a binding site for GTP. Residue Met189 coordinates S-adenosyl-L-methionine. [4Fe-4S] cluster-binding residues include Cys249 and Cys252. Residue 254 to 256 (RIR) participates in GTP binding. Cys266 serves as a coordination point for [4Fe-4S] cluster.

It belongs to the radical SAM superfamily. MoaA family. As to quaternary structure, monomer and homodimer. The cofactor is [4Fe-4S] cluster.

The enzyme catalyses GTP + AH2 + S-adenosyl-L-methionine = (8S)-3',8-cyclo-7,8-dihydroguanosine 5'-triphosphate + 5'-deoxyadenosine + L-methionine + A + H(+). Its pathway is cofactor biosynthesis; molybdopterin biosynthesis. Functionally, catalyzes the cyclization of GTP to (8S)-3',8-cyclo-7,8-dihydroguanosine 5'-triphosphate. The sequence is that of GTP 3',8-cyclase from Helicobacter pylori (strain HPAG1).